The chain runs to 397 residues: Elongation factor Tu (397 aa).

Positions K10–E207 constitute a tr-type G domain. The segment at G19–T26 is G1. G19–T26 contacts GTP. Residue T26 participates in Mg(2+) binding. The G2 stretch occupies residues G60–N64. The tract at residues D81–G84 is G3. Residues D81 to H85 and N136 to D139 each bind GTP. The segment at N136–D139 is G4. A G5 region spans residues S174–L176.

This sequence belongs to the TRAFAC class translation factor GTPase superfamily. Classic translation factor GTPase family. EF-Tu/EF-1A subfamily. As to quaternary structure, monomer.

Its subcellular location is the cytoplasm. The catalysed reaction is GTP + H2O = GDP + phosphate + H(+). Its function is as follows. GTP hydrolase that promotes the GTP-dependent binding of aminoacyl-tRNA to the A-site of ribosomes during protein biosynthesis. The protein is Elongation factor Tu of Syntrophus aciditrophicus (strain SB).